Reading from the N-terminus, the 1641-residue chain is Ophiophagus venom factor (1641 aa).

The signal sequence occupies residues 1 to 22 (MEGMALYLVAALLIGFPGSSHG). N-linked (GlcNAc...) asparagine glycans are attached at residues asparagine 181 and asparagine 209. 4 residues coordinate Mg(2+): proline 507, aspartate 530, valine 531, and aspartate 533. Cystine bridges form between cysteine 535–cysteine 796, cysteine 604–cysteine 639, cysteine 672–cysteine 699, cysteine 673–cysteine 706, cysteine 686–cysteine 707, cysteine 852–cysteine 1491, cysteine 1336–cysteine 1467, cysteine 1367–cysteine 1436, cysteine 1484–cysteine 1489, cysteine 1496–cysteine 1568, cysteine 1515–cysteine 1639, and cysteine 1615–cysteine 1624. Positions 645–728 (RRRRSSVLLL…WESGLFLPRN (84 aa)) are excised as a propeptide. Residues 649–727 (SSVLLLDSKA…QWESGLFLPR (79 aa)) form a C3a-like domain region. In terms of domain architecture, Anaphylatoxin-like spans 672 to 707 (CCEDSMHENPMGYTCEKRAKYIQEGDACKAAFLECC). Positions 731 to 742 (EDGFIQDSDIIP) are factor B binding site. Positions 981–1259 (HLIITPSGCG…VMLFQALAEY (279 aa)) are excised as a propeptide. Positions 981–1259 (HLIITPSGCG…VMLFQALAEY (279 aa)) are C3d-like domain. The segment at residues 989-992 (CGEQ) is a cross-link (isoglutamyl cysteine thioester (Cys-Gln)). The interval 1186–1249 (VLMAASTGKN…GGTYGQTQAT (64 aa)) is factor H binding site. Residues 1496-1639 (CSLLSQQEKI…LSNILTIFGC (144 aa)) enclose the NTR domain.

This sequence belongs to the venom complement C3 homolog family. In terms of assembly, heterotrimer of alpha, beta and gamma chains; disulfide-linked. May be active with factor B in the presence of factor D. First processed by the removal of 4 Arg residues by furin-type protease, forming two chains, alpha and gamma/beta precursor, linked by a disulfide bond. Probably, a cobrin-like protease cleaves the C3a-like domain and then the C3d-like domain, generating the mature venom factor (OVF). Post-translationally, the beta chain is not glycosylated. As to expression, expressed by the venom gland.

The protein localises to the secreted. Functionally, complement-activating protein in cobra venom. It is a structural and functional analog of complement component C3b, the activated form of C3. It binds factor B (CFB), which is subsequently cleaved by factor D (CFD) to form the bimolecular complex OVF/Bb. OVF/Bb is a C3/C5 convertase that cleaves both complement components C3 and C5. Structurally, it resembles the C3b degradation product C3c, which is not able to form a C3/C5 convertase. Unlike C3b/Bb, OVF/Bb is a stable complex and completely resistant to the actions of complement regulatory factors H (CFH) and I (CFI). Therefore, OVF continuously activates complement. As a result, OVF exhibits complement-depleting activity. The sequence is that of Ophiophagus venom factor from Ophiophagus hannah (King cobra).